Here is a 609-residue protein sequence, read N- to C-terminus: UvrABC system protein C (609 aa).

The GIY-YIG domain occupies 15-92 (TGSGVYQMQD…IKQFRPRYNV (78 aa)). Residues 202-237 (DQVIIKLTERMEVASENLVFEEAAHYRDQIRQLRRL) form the UVR domain.

It belongs to the UvrC family. As to quaternary structure, interacts with UvrB in an incision complex.

It is found in the cytoplasm. Functionally, the UvrABC repair system catalyzes the recognition and processing of DNA lesions. UvrC both incises the 5' and 3' sides of the lesion. The N-terminal half is responsible for the 3' incision and the C-terminal half is responsible for the 5' incision. This is UvrABC system protein C from Coxiella burnetii (strain CbuK_Q154) (Coxiella burnetii (strain Q154)).